The primary structure comprises 439 residues: C4-dicarboxylate transport protein (439 aa).

Helical transmembrane passes span 9–29 (SLYA…HFLP), 45–65 (LIKM…IAGM), 77–97 (LALL…LIIV), 145–165 (AFAK…GFAL), 185–205 (VLFT…FGAM), 223–243 (LMGA…GIVT), 290–310 (VVGL…AIYL), 332–352 (TLLA…GSGF), and 353–373 (IVLA…LALI). The interval 417-439 (NESPQAADQPEKILDQTNTKLGA) is disordered.

This sequence belongs to the dicarboxylate/amino acid:cation symporter (DAACS) (TC 2.A.23) family.

Its subcellular location is the cell inner membrane. Its function is as follows. Responsible for the transport of dicarboxylates such as succinate, fumarate, and malate from the periplasm across the membrane. The sequence is that of C4-dicarboxylate transport protein from Janthinobacterium sp. (strain Marseille) (Minibacterium massiliensis).